The primary structure comprises 154 residues: Myoglobin (154 aa).

The 147-residue stretch at 2–148 (GLSDQEWQQV…FRNDMASKYK (147 aa)) folds into the Globin domain. His-65 provides a ligand contact to nitrite. Position 65 (His-65) interacts with O2. His-94 contributes to the heme b binding site.

In terms of assembly, monomeric.

It is found in the cytoplasm. It localises to the sarcoplasm. The enzyme catalyses Fe(III)-heme b-[protein] + nitric oxide + H2O = Fe(II)-heme b-[protein] + nitrite + 2 H(+). It catalyses the reaction H2O2 + AH2 = A + 2 H2O. Functionally, monomeric heme protein which primary function is to store oxygen and facilitate its diffusion within muscle tissues. Reversibly binds oxygen through a pentacoordinated heme iron and enables its timely and efficient release as needed during periods of heightened demand. Depending on the oxidative conditions of tissues and cells, and in addition to its ability to bind oxygen, it also has a nitrite reductase activity whereby it regulates the production of bioactive nitric oxide. Under stress conditions, like hypoxia and anoxia, it also protects cells against reactive oxygen species thanks to its pseudoperoxidase activity. In Struthio camelus (Common ostrich), this protein is Myoglobin (MB).